A 472-amino-acid polypeptide reads, in one-letter code: Tryptophanase (472 aa).

An N6-(pyridoxal phosphate)lysine modification is found at lysine 270.

This sequence belongs to the beta-eliminating lyase family. In terms of assembly, homotetramer. Pyridoxal 5'-phosphate is required as a cofactor.

The enzyme catalyses L-tryptophan + H2O = indole + pyruvate + NH4(+). It participates in amino-acid degradation; L-tryptophan degradation via pyruvate pathway; indole and pyruvate from L-tryptophan: step 1/1. The protein is Tryptophanase of Haemophilus influenzae (strain 86-028NP).